The primary structure comprises 338 residues: MSFRKYALITGSNSGLGFGIATRLLQFYQPRLQDEPEVFTVILTCRSREKAEDACRRLKEFFPDRKIRLEYVLLDLSNMASVEAAVQDIATRFPKLDFVYLNAGAWDLEGIQWLKAIFSTLINPIQALTHPTFYKETAGRVSNDSLGYIFESNVFGHFYLKNRLAELKVLRSSTKVVLTSSLVAEKKSLDFEDLQCFHGEQPYQSSKRLLDVLHYAELEKGLPFEQYLVHPGLCTTNMYETFLGPILVMCAKLGFYICRLLGSPWHTISPYVAAFAFLWTALHATKEDQSIKWGAAVTRFGHERVLSTPVELILPSEQEKALEYMTKLYQEWKKKLVS.

Residues leucine 16, threonine 44, lysine 50, and aspartate 75 each coordinate NADP(+). Catalysis depends on proton donor residues serine 180 and tyrosine 203. 3 residues coordinate NADP(+): tyrosine 203, lysine 207, and threonine 236. Lysine 207 (lowers pKa of active site Tyr) is an active-site residue.

Belongs to the short-chain dehydrogenases/reductases (SDR) family. ERG27 subfamily. Heterotetramer of erg25, erg26, erg27 and erg28. Erg28 acts as a scaffold to tether erg27 and other 4,4-demethylation-related enzymes, forming a demethylation enzyme complex, in the endoplasmic reticulum.

The enzyme catalyses 3-dehydro-4alpha-methylzymosterol + NADPH + H(+) = 4alpha-methylzymosterol + NADP(+). It functions in the pathway steroid biosynthesis; zymosterol biosynthesis; zymosterol from lanosterol: step 5/6. It participates in steroid metabolism; ergosterol biosynthesis. 3-keto-steroid reductase; part of the third module of ergosterol biosynthesis pathway that includes by the late steps of the pathway. Erg27 is a catalytic component of the C-4 demethylation complex that catalyze the reduction of the keto group on the C-3. The third module or late pathway involves the ergosterol synthesis itself through consecutive reactions that mainly occur in the endoplasmic reticulum (ER) membrane. Firstly, the squalene synthase erg9 catalyzes the condensation of 2 farnesyl pyrophosphate moieties to form squalene, which is the precursor of all steroids. Secondly, squalene is converted into lanosterol by the consecutive action of the squalene epoxidase erg1 and the lanosterol synthase erg7. The lanosterol 14-alpha-demethylase erg11/cyp1 catalyzes C14-demethylation of lanosterol to produce 4,4'-dimethyl cholesta-8,14,24-triene-3-beta-ol. In the next steps, a complex process involving various demethylation, reduction and desaturation reactions catalyzed by the C-14 reductase erg24 and the C-4 demethylation complex erg25-erg26-erg27 leads to the production of zymosterol. Erg28 likely functions in the C-4 demethylation complex reaction by tethering erg26 and Erg27 to the endoplasmic reticulum or to facilitate interaction between these proteins. Then, the sterol 24-C-methyltransferase erg6 catalyzes the methyl transfer from S-adenosyl-methionine to the C-24 of zymosterol to form fecosterol. The C-8 sterol isomerase erg2 catalyzes the reaction which results in unsaturation at C-7 in the B ring of sterols and thus converts fecosterol to episterol. The sterol-C5-desaturases erg31 and erg32 then catalyze the introduction of a C-5 double bond in the B ring to produce 5-dehydroepisterol. The C-22 sterol desaturase erg5 further converts 5-dehydroepisterol into ergosta-5,7,22,24(28)-tetraen-3beta-ol by forming the C-22(23) double bond in the sterol side chain. Finally, ergosta-5,7,22,24(28)-tetraen-3beta-ol is substrate of the C-24(28) sterol reductase erg4 to produce ergosterol. In the genus Schizosaccharomyces, a second route exists between lanosterol and fecosterol, via the methylation of lanosterol to eburicol by erg6, followed by C14-demethylation by erg11/cyp1 and C4-demethylation by the demethylation complex erg25-erg26-erg27. This is 3-keto-steroid reductase erg27 from Schizosaccharomyces pombe (strain 972 / ATCC 24843) (Fission yeast).